Reading from the N-terminus, the 227-residue chain is MAYPLQLGLQDATSPIMEELMNFHDHTLMIVFLISSLVLYIISLMLTTKLTHTSTMDAQEVETIWTILPAVILIMIALPSLRILYMMDEINNPVLTVKTMGHQWYWSYEYTDYEDLCFDSYMVPTNDLKPGELRLLEVDNRVVLPMELPIRMLISSEDVLHSWAVPSLGLKTDAIPGRLNQATVTSNRPGLFYGQCSEICGSNHSFMPIVLEMVPLKHFENWSASMI.

The Mitochondrial intermembrane segment spans residues M1 to S14. A helical transmembrane segment spans residues P15–M45. Residues L46–Q59 lie on the Mitochondrial matrix side of the membrane. Residues E60–M87 form a helical membrane-spanning segment. At D88–I227 the chain is on the mitochondrial intermembrane side. Residues H161, C196, E198, C200, H204, and M207 each contribute to the Cu cation site. E198 lines the Mg(2+) pocket.

The protein belongs to the cytochrome c oxidase subunit 2 family. As to quaternary structure, component of the cytochrome c oxidase (complex IV, CIV), a multisubunit enzyme composed of 14 subunits. The complex is composed of a catalytic core of 3 subunits MT-CO1, MT-CO2 and MT-CO3, encoded in the mitochondrial DNA, and 11 supernumerary subunits COX4I, COX5A, COX5B, COX6A, COX6B, COX6C, COX7A, COX7B, COX7C, COX8 and NDUFA4, which are encoded in the nuclear genome. The complex exists as a monomer or a dimer and forms supercomplexes (SCs) in the inner mitochondrial membrane with NADH-ubiquinone oxidoreductase (complex I, CI) and ubiquinol-cytochrome c oxidoreductase (cytochrome b-c1 complex, complex III, CIII), resulting in different assemblies (supercomplex SCI(1)III(2)IV(1) and megacomplex MCI(2)III(2)IV(2)). Found in a complex with TMEM177, COA6, COX18, COX20, SCO1 and SCO2. Interacts with TMEM177 in a COX20-dependent manner. Interacts with COX20. Interacts with COX16. It depends on Cu cation as a cofactor.

It localises to the mitochondrion inner membrane. It carries out the reaction 4 Fe(II)-[cytochrome c] + O2 + 8 H(+)(in) = 4 Fe(III)-[cytochrome c] + 2 H2O + 4 H(+)(out). Functionally, component of the cytochrome c oxidase, the last enzyme in the mitochondrial electron transport chain which drives oxidative phosphorylation. The respiratory chain contains 3 multisubunit complexes succinate dehydrogenase (complex II, CII), ubiquinol-cytochrome c oxidoreductase (cytochrome b-c1 complex, complex III, CIII) and cytochrome c oxidase (complex IV, CIV), that cooperate to transfer electrons derived from NADH and succinate to molecular oxygen, creating an electrochemical gradient over the inner membrane that drives transmembrane transport and the ATP synthase. Cytochrome c oxidase is the component of the respiratory chain that catalyzes the reduction of oxygen to water. Electrons originating from reduced cytochrome c in the intermembrane space (IMS) are transferred via the dinuclear copper A center (CU(A)) of subunit 2 and heme A of subunit 1 to the active site in subunit 1, a binuclear center (BNC) formed by heme A3 and copper B (CU(B)). The BNC reduces molecular oxygen to 2 water molecules using 4 electrons from cytochrome c in the IMS and 4 protons from the mitochondrial matrix. The protein is Cytochrome c oxidase subunit 2 (MT-CO2) of Zelotomys hildegardeae (Hildegarde's broad-headed mouse).